The sequence spans 853 residues: Aminotransferase PigE (853 aa).

A pyridoxal 5'-phosphate-binding site is contributed by 503–504 (GT). Residue Lys645 is modified to N6-(pyridoxal phosphate)lysine. Pyridoxal 5'-phosphate is bound at residue Thr680.

The protein belongs to the class-III pyridoxal-phosphate-dependent aminotransferase family. As to quaternary structure, homodimer. Pyridoxal 5'-phosphate is required as a cofactor.

The protein operates within antibiotic biosynthesis; prodigiosin biosynthesis. Its function is as follows. Involved in the biosynthesis of 2-methyl-3-n-amyl-pyrrole (MAP), one of the terminal products involved in the biosynthesis of the red antibiotic prodigiosin (Pig). Catalyzes the transamination to the aldehyde group of 3-acetyloctanal, resulting in an aminoketone, which spontaneously cyclizes to yield the dihydro form of MAP (H2MAP). This chain is Aminotransferase PigE, found in Serratia sp. (strain FS14).